The primary structure comprises 187 residues: Elongation factor P (187 aa).

Lys-33 bears the N6-(3,6-diaminohexanoyl)-5-hydroxylysine mark.

Belongs to the elongation factor P family. In terms of processing, may be beta-lysylated on the epsilon-amino group of Lys-33 by the combined action of EpmA and EpmB, and then hydroxylated on the C5 position of the same residue by EpmC (if this protein is present). Lysylation is critical for the stimulatory effect of EF-P on peptide-bond formation. The lysylation moiety may extend toward the peptidyltransferase center and stabilize the terminal 3-CCA end of the tRNA. Hydroxylation of the C5 position on Lys-33 may allow additional potential stabilizing hydrogen-bond interactions with the P-tRNA.

The protein localises to the cytoplasm. The protein operates within protein biosynthesis; polypeptide chain elongation. Involved in peptide bond synthesis. Alleviates ribosome stalling that occurs when 3 or more consecutive Pro residues or the sequence PPG is present in a protein, possibly by augmenting the peptidyl transferase activity of the ribosome. Modification of Lys-33 is required for alleviation. This chain is Elongation factor P, found in Blochmanniella floridana.